Reading from the N-terminus, the 471-residue chain is UTP--glucose-1-phosphate uridylyltransferase (471 aa).

UTP-binding positions include 87–90 (LNGG), Lys101, Gln164, and Gly193. 89 to 90 (GG) is a substrate binding site. Substrate-binding positions include His194 and 222 to 224 (NSD). Residues Asp224 and Lys362 each contribute to the UTP site.

Belongs to the UDPGP type 1 family.

The protein localises to the cytoplasm. It carries out the reaction alpha-D-glucose 1-phosphate + UTP + H(+) = UDP-alpha-D-glucose + diphosphate. Plays a central role as a glucosyl donor in cellular metabolic pathways. The chain is UTP--glucose-1-phosphate uridylyltransferase (UGP) from Astragalus penduliflorus (Mountain lentil).